The chain runs to 331 residues: 7,8-didemethyl-8-hydroxy-5-deazariboflavin synthase (331 aa).

Residues 6 to 244 enclose the Radical SAM core domain; the sequence is ITFSKNAFLP…ADVAVQIPPN (239 aa). Positions 20, 24, and 27 each coordinate [4Fe-4S] cluster.

Belongs to the radical SAM superfamily. CofG family. Consists of two subunits, CofG and CofH. The cofactor is [4Fe-4S] cluster.

The enzyme catalyses 5-amino-5-(4-hydroxybenzyl)-6-(D-ribitylimino)-5,6-dihydrouracil + S-adenosyl-L-methionine = 7,8-didemethyl-8-hydroxy-5-deazariboflavin + 5'-deoxyadenosine + L-methionine + NH4(+) + H(+). The protein operates within cofactor biosynthesis; coenzyme F0 biosynthesis. Functionally, catalyzes the radical-mediated synthesis of 7,8-didemethyl-8-hydroxy-5-deazariboflavin from 5-amino-5-(4-hydroxybenzyl)-6-(D-ribitylimino)-5,6-dihydrouracil. In Methanoculleus marisnigri (strain ATCC 35101 / DSM 1498 / JR1), this protein is 7,8-didemethyl-8-hydroxy-5-deazariboflavin synthase.